We begin with the raw amino-acid sequence, 540 residues long: Chaperonin GroEL (540 aa).

ATP is bound by residues 29–32 (TIGP), 86–90 (DGTTT), Gly413, 476–478 (NAA), and Asp492. The interval 520 to 540 (DKPEPESNNQMPATPGMGGMM) is disordered.

The protein belongs to the chaperonin (HSP60) family. In terms of assembly, forms a cylinder of 14 subunits composed of two heptameric rings stacked back-to-back. Interacts with the co-chaperonin GroES.

It localises to the cytoplasm. The catalysed reaction is ATP + H2O + a folded polypeptide = ADP + phosphate + an unfolded polypeptide.. Functionally, together with its co-chaperonin GroES, plays an essential role in assisting protein folding. The GroEL-GroES system forms a nano-cage that allows encapsulation of the non-native substrate proteins and provides a physical environment optimized to promote and accelerate protein folding. The protein is Chaperonin GroEL of Ligilactobacillus salivarius (strain UCC118) (Lactobacillus salivarius).